Consider the following 258-residue polypeptide: UPF0246 protein Asuc_0575 (258 aa).

This sequence belongs to the UPF0246 family.

The sequence is that of UPF0246 protein Asuc_0575 from Actinobacillus succinogenes (strain ATCC 55618 / DSM 22257 / CCUG 43843 / 130Z).